Consider the following 317-residue polypeptide: Thiamine thiazole synthase (317 aa).

Residues cysteine 78, 99-100 (EA), glycine 107, and valine 172 each bind substrate. The residue at position 206 (cysteine 206) is a 2,3-didehydroalanine (Cys). Residues aspartate 208, histidine 223, methionine 275, and 285–287 (RMG) each bind substrate.

Belongs to the THI4 family. Homooctamer. Fe cation serves as cofactor. In terms of processing, during the catalytic reaction, a sulfide is transferred from Cys-206 to a reaction intermediate, generating a dehydroalanine residue.

It localises to the cytoplasm. Its subcellular location is the nucleus. The catalysed reaction is [ADP-thiazole synthase]-L-cysteine + glycine + NAD(+) = [ADP-thiazole synthase]-dehydroalanine + ADP-5-ethyl-4-methylthiazole-2-carboxylate + nicotinamide + 3 H2O + 2 H(+). Functionally, involved in biosynthesis of the thiamine precursor thiazole. Catalyzes the conversion of NAD and glycine to adenosine diphosphate 5-(2-hydroxyethyl)-4-methylthiazole-2-carboxylic acid (ADT), an adenylated thiazole intermediate. The reaction includes an iron-dependent sulfide transfer from a conserved cysteine residue of the protein to a thiazole intermediate. The enzyme can only undergo a single turnover, which suggests it is a suicide enzyme. May have additional roles in adaptation to various stress conditions and in DNA damage tolerance. This chain is Thiamine thiazole synthase, found in Yarrowia lipolytica (strain CLIB 122 / E 150) (Yeast).